The sequence spans 62 residues: ATP synthase subunit K, mitochondrial (62 aa).

Residues 14-30 form a helical membrane-spanning segment; that stretch reads HHLAIATIGTVVALVAP.

In terms of assembly, F-type ATP synthases have 2 components, the catalytic core F(1) and the membrane-embedded component F(0), linked together by a central stalk and a peripheral stalk. The central stalk, also called rotor shaft, is often seen as part of F(1). The peripheral stalk is seen as part of F(0). F(0) contains the membrane channel next to the rotor. F-type ATP synthases form dimers but each monomer functions independently in ATP generation. The dimer consists of 18 different polypeptides: ATP1 (subunit alpha, part of F(1), 3 molecules per monomer), ATP2 (subunit beta, part of F(1), 3 molecules per monomer), ATP3 (subunit gamma, part of the central stalk), ATP4 (subunit b, part of the peripheral stalk), ATP5/OSCP (subunit 5/OSCP, part of the peripheral stalk), ATP6 (subunit a, part of the peripheral stalk), ATP7 (subunit d, part of the peripheral stalk), ATP8 (subunit 8, part of the peripheral stalk), OLI1 (subunit c, part of the rotor, 10 molecules per monomer), ATP14 (subunit h, part of the peripheral stalk), ATP15 (subunit epsilon, part of the central stalk), ATP16 (subunit delta, part of the central stalk), ATP17 (subunit f, part of the peripheral stalk), ATP18 (subunit i/j, part of the peripheral stalk). Dimer-specific subunits are ATP19 (subunit k, at interface between monomers), ATP20 (subunit g, at interface between monomers), TIM11 (subunit e, at interface between monomers). Also contains subunit L.

Its subcellular location is the mitochondrion inner membrane. Mitochondrial membrane ATP synthase (F(1)F(0) ATP synthase or Complex V) produces ATP from ADP in the presence of a proton gradient across the membrane which is generated by electron transport complexes of the respiratory chain. F-type ATP synthases consist of two structural domains, F(1) - containing the extramembraneous catalytic core, and F(0) - containing the membrane proton channel, linked together by a central stalk and a peripheral stalk. During catalysis, ATP synthesis in the catalytic domain of F(1) is coupled via a rotary mechanism of the central stalk subunits to proton translocation. Part of the complex F(0) domain. Minor subunit located with subunit a/ATP6 in the membrane. The K chain binds the dimeric form by interacting with the G and E chains. This Pichia angusta (Yeast) protein is ATP synthase subunit K, mitochondrial.